The sequence spans 274 residues: 2,3,4,5-tetrahydropyridine-2,6-dicarboxylate N-succinyltransferase (274 aa).

The substrate site is built by R104 and D141.

The protein belongs to the transferase hexapeptide repeat family. Homotrimer.

It localises to the cytoplasm. It catalyses the reaction (S)-2,3,4,5-tetrahydrodipicolinate + succinyl-CoA + H2O = (S)-2-succinylamino-6-oxoheptanedioate + CoA. It functions in the pathway amino-acid biosynthesis; L-lysine biosynthesis via DAP pathway; LL-2,6-diaminopimelate from (S)-tetrahydrodipicolinate (succinylase route): step 1/3. This chain is 2,3,4,5-tetrahydropyridine-2,6-dicarboxylate N-succinyltransferase, found in Edwardsiella ictaluri (strain 93-146).